A 200-amino-acid chain; its full sequence is Protein GrpE (200 aa).

Positions 1–11 are enriched in polar residues; it reads MSNQTNKAQDN. Positions 1–25 are disordered; the sequence is MSNQTNKAQDNQVEEIVEGELLNEN.

It belongs to the GrpE family. As to quaternary structure, homodimer.

The protein localises to the cytoplasm. Its function is as follows. Participates actively in the response to hyperosmotic and heat shock by preventing the aggregation of stress-denatured proteins, in association with DnaK and GrpE. It is the nucleotide exchange factor for DnaK and may function as a thermosensor. Unfolded proteins bind initially to DnaJ; upon interaction with the DnaJ-bound protein, DnaK hydrolyzes its bound ATP, resulting in the formation of a stable complex. GrpE releases ADP from DnaK; ATP binding to DnaK triggers the release of the substrate protein, thus completing the reaction cycle. Several rounds of ATP-dependent interactions between DnaJ, DnaK and GrpE are required for fully efficient folding. This Shewanella pealeana (strain ATCC 700345 / ANG-SQ1) protein is Protein GrpE.